Here is a 120-residue protein sequence, read N- to C-terminus: Putative monooxygenase GME11364 (120 aa).

The region spanning 9–99 (VSVHIRLTVD…ILLKPHEVEL (91 aa)) is the ABM domain.

Belongs to the LsrG family.

It functions in the pathway secondary metabolite biosynthesis. Functionally, putative monooxygenase; part of the gene cluster that mediates the biosynthesis of dibenzodioxocinones such as pestalotiollide B, a novel class of inhibitors against cholesterol ester transfer protein (CEPT). The biosynthesis initiates from condensation of acetate and malonate units catalyzed by the non-reducing PKS pks8/GME11356. Pks8/GME11356 lacks a thioesterase (TE) domain, which is important to the cyclizing of the third ring of atrochrysone carboxylic acid, and the esterase GME11355 might play the role of TE and catalyzes the cyclization reaction of the C ring. The lactamase-like protein GME11357 (or other beta-lactamases in Pestalotiopsis microspora) probably hydrolyzes the thioester bond between the ACP of pks8/GME11356 and the intermediate to release atrochrysone carboxylic acid, which is spontaneously dehydrates to form endocrocin anthrone. Endocrocin anthrone is further converted to emodin via the endocrocin intermediate. Emodin is then oxidized by several enzymes such as the Baeyer-Villiger oxidase GME11358, the oxidoreductase GME11367, the short chain dehydrogenase/reductase GME11373, as well as by other oxidoreductases from the cluster, to modify the A and C rings and open the B ring, and finally yield monodictyphenone. The prenyltransferase GME11375 may catalyze the addition reaction between the C5 side chains and the carbon bone of dibenzodioxocinones. The remaining biochemical reactions to the final product dibenzodioxocinones should be methylation catalyzed by methyltransferase GME11366 and reduction and lactonization reaction catalyzed by a series of oxidordeuctases. This is Putative monooxygenase GME11364 from Pestalotiopsis microspora.